Reading from the N-terminus, the 104-residue chain is Large ribosomal subunit protein bL21 (104 aa).

It belongs to the bacterial ribosomal protein bL21 family. As to quaternary structure, part of the 50S ribosomal subunit. Contacts protein L20.

In terms of biological role, this protein binds to 23S rRNA in the presence of protein L20. The protein is Large ribosomal subunit protein bL21 of Streptococcus pyogenes serotype M1.